The chain runs to 553 residues: MRKIQAKKGLSIECKGWEQEAVLRMLYNNLDTEVAERPEDLVVYGGIGKAARNWEAFEAIEKTLRELESDETMLVQSGKPVAVFKTHEEAPRVLISNSVLVPEWANWDHFNELDKKGLIMYGQMTAGSWIYIGSQGIVQGTYETFAELGNQHFNGDLAGTVTLTAGLGGMGGAQPLAITMNHGVAICVDVDETRVDKRIATKYCDIKTANLDEALKLAEEAKERGEGLSIGLVGNAVDLHQAILEKGFKIDIITDQTSAHDPLNGYVPQGYSVEEAKVLREKDPKKYVELSQASMAKHVELMLEFHKRGAVAFDYGNNIRQVAFNNGVRNAFDFPGFVPAYIRPLFCEGKGPFRFAALSGDPKDIERADEEMRKLFPENEKLLRWLDLAEEKISYQGLPSRIAWLGYGERAKMGLALNRLVRDGEISAPIVIGRDHLDAGSVASPNRETESMKDGSDAVGDWAVLNALINTAAGGSWISFHHGGGVGMGYSLHAGMVVVADGSERAERRLERVLTTDPGMGVARHVDAGYDIAIQTAKEKGIHIPMIDKAGDK.

NAD(+)-binding positions include 45–46, Gln123, 169–171, Asp189, Arg194, 235–236, 256–260, 266–267, Tyr315, and Gly485; these read GG, GMG, NA, QTSAH, and YV.

The protein belongs to the urocanase family. NAD(+) is required as a cofactor.

It is found in the cytoplasm. The enzyme catalyses 4-imidazolone-5-propanoate = trans-urocanate + H2O. Its pathway is amino-acid degradation; L-histidine degradation into L-glutamate; N-formimidoyl-L-glutamate from L-histidine: step 2/3. Functionally, catalyzes the conversion of urocanate to 4-imidazolone-5-propionate. This Staphylococcus aureus (strain MRSA252) protein is Urocanate hydratase.